Here is a 500-residue protein sequence, read N- to C-terminus: MSFVLAIDQGTTSSRAIVFRDDISIAAVAQQEFSQHFPASGWVEHEPEDIWSSTLATSRAAIEQAGLKASDIAAIGITNQRETVVLWDRVTGQAIHRAIVWQDRRTSEICARLKSEGHEPLITQKTGLIIDPYFSGTKIGWLLDQVPGARARAERGELLFGTVDCYLLWRLTGGKIHATDATNASRTLLFNIHTGQWDAELLALLNVPRSLLPEVKDSSADFGTSDQNLFGGSIAIRGIAGDQQAATIGQACFAPGMMKSTYGTGCFALLNTGSTPVKSNNKLLTTIAYQLNGQRTYALEGSIFVAGSAVQWLRDGLGIISHASETGPLADKSDSTQSVYLVPAFVGLGAPYWNPRLRGALFGLTRNTGPAELAHAALESVCYQTFDLWAAMRADWPDADEASIVLRVDGGMTASDWTMQRLADLLDAPVDRPMIQETTALGAAYLAGLSAGIFPEPQQFADNWRLQHRFKPSMSAATRARKLKGWAAAVRGLLATDEGE.

Residue T11 participates in ADP binding. Positions 11, 12, and 13 each coordinate ATP. T11 is a binding site for sn-glycerol 3-phosphate. R15 provides a ligand contact to ADP. Sn-glycerol 3-phosphate contacts are provided by R81, E82, Y133, and D242. Glycerol-binding residues include R81, E82, Y133, D242, and Q243. ADP contacts are provided by T264 and G307. Residues T264, G307, Q311, and G411 each coordinate ATP. Residue G411 coordinates ADP.

This sequence belongs to the FGGY kinase family.

The catalysed reaction is glycerol + ATP = sn-glycerol 3-phosphate + ADP + H(+). It functions in the pathway polyol metabolism; glycerol degradation via glycerol kinase pathway; sn-glycerol 3-phosphate from glycerol: step 1/1. Inhibited by fructose 1,6-bisphosphate (FBP). Functionally, key enzyme in the regulation of glycerol uptake and metabolism. Catalyzes the phosphorylation of glycerol to yield sn-glycerol 3-phosphate. In Rhodopseudomonas palustris (strain BisA53), this protein is Glycerol kinase.